A 132-amino-acid polypeptide reads, in one-letter code: L-ectoine synthase (132 aa).

It belongs to the ectoine synthase family.

The catalysed reaction is (2S)-4-acetamido-2-aminobutanoate = L-ectoine + H2O. Its pathway is amine and polyamine biosynthesis; ectoine biosynthesis; L-ectoine from L-aspartate 4-semialdehyde: step 3/3. Functionally, catalyzes the circularization of gamma-N-acetyl-alpha,gamma-diaminobutyric acid (ADABA) to ectoine (1,4,5,6-tetrahydro-2-methyl-4-pyrimidine carboxylic acid), which is an excellent osmoprotectant. This Saccharophagus degradans (strain 2-40 / ATCC 43961 / DSM 17024) protein is L-ectoine synthase.